The primary structure comprises 1407 residues: Clustered mitochondria protein (1407 aa).

Positions 1 to 12 are enriched in basic residues; that stretch reads MAGKSNKSKAKR. Disordered stretches follow at residues 1 to 36 and 83 to 103; these read MAGKSNKSKAKRAAQSTTTNSTTDVKSDAPAPPVAA and IPKADESESQVENNDAQPKQG. A compositionally biased stretch (polar residues) spans 14-24; it reads AQSTTTNSTTD. In terms of domain architecture, Clu spans 384–670; it reads PDHKRDAARA…RVTPRDANYT (287 aa). The interval 724-760 is disordered; the sequence is IDGEANGASNSDQKSISDKQNTTAEDYAAGSSESSKS. Polar residues predominate over residues 730–747; sequence GASNSDQKSISDKQNTTA. TPR repeat units follow at residues 1025 to 1058, 1067 to 1100, 1109 to 1142, 1151 to 1184, and 1193 to 1226; these read AKDLVEMGKVQLAEGMLSESYTFFSEAFSILQQV, ANCCRYLAMVLYHAGDMAGAIMQQHKELIINERC, AHSYGNMALFYHGLNQTELALQNMGRALLLLGLS, AATFINVAMMYQDMGKMDTALRYLQEALKKNERL, and AVCYHALAIAFNCMGAFKLSHQHEKKTYDILVKQ. The interval 1358–1407 is disordered; it reads VSSEKGGENGEAKVQEKKESSENGKTENLAPAGLGAGLTSLDKKKQKAKK. Over residues 1362-1382 the composition is skewed to basic and acidic residues; that stretch reads KGGENGEAKVQEKKESSENGK.

Belongs to the CLU family.

It localises to the cytoplasm. Its function is as follows. mRNA-binding protein involved in proper cytoplasmic distribution of mitochondria. Together with REC2, REC3 and FMT/CLU, contributes to the establishment of the cellular volume devoted to the chloroplast compartment. This chain is Clustered mitochondria protein, found in Arabidopsis thaliana (Mouse-ear cress).